A 285-amino-acid chain; its full sequence is 3-methyl-2-oxobutanoate hydroxymethyltransferase 1 (285 aa).

Asp49 and Asp88 together coordinate Mg(2+). 3-methyl-2-oxobutanoate contacts are provided by residues 49-50 (DS), Asp88, and Lys118. A Mg(2+)-binding site is contributed by Glu120. The Proton acceptor role is filled by Glu187.

This sequence belongs to the PanB family. In terms of assembly, homodecamer; pentamer of dimers. Mg(2+) is required as a cofactor.

It is found in the cytoplasm. It carries out the reaction 3-methyl-2-oxobutanoate + (6R)-5,10-methylene-5,6,7,8-tetrahydrofolate + H2O = 2-dehydropantoate + (6S)-5,6,7,8-tetrahydrofolate. The protein operates within cofactor biosynthesis; (R)-pantothenate biosynthesis; (R)-pantoate from 3-methyl-2-oxobutanoate: step 1/2. Its function is as follows. Catalyzes the reversible reaction in which hydroxymethyl group from 5,10-methylenetetrahydrofolate is transferred onto alpha-ketoisovalerate to form ketopantoate. This is 3-methyl-2-oxobutanoate hydroxymethyltransferase 1 from Burkholderia lata (strain ATCC 17760 / DSM 23089 / LMG 22485 / NCIMB 9086 / R18194 / 383).